Reading from the N-terminus, the 232-residue chain is Two-component response regulator ORR4 (232 aa).

A Response regulatory domain is found at 11–147 (HVLAVDDSLI…DMKKLKSHLL (137 aa)). Asp-80 is modified (4-aspartylphosphate). 2 disordered regions span residues 153 to 174 (LPMA…AASA) and 202 to 232 (AAAM…AVET). The span at 209–232 (VISSPDQRTKPRLSSTSSGLAVET) shows a compositional bias: polar residues.

This sequence belongs to the ARR family. Type-A subfamily. In terms of processing, two-component system major event consists of a His-to-Asp phosphorelay between a sensor histidine kinase (HK) and a response regulator (RR). In plants, the His-to-Asp phosphorelay involves an additional intermediate named Histidine-containing phosphotransfer protein (HPt). This multistep phosphorelay consists of a His-Asp-His-Asp sequential transfer of a phosphate group between first a His and an Asp of the HK protein, followed by the transfer to a conserved His of the HPt protein and finally the transfer to an Asp in the receiver domain of the RR protein. Expressed in mature leaves and flowers, and at low levels in roots and shoots.

Functions as a response regulator involved in His-to-Asp phosphorelay signal transduction system. Phosphorylation of the Asp residue in the receiver domain activates the ability of the protein to promote the transcription of target genes. Type-A response regulators seem to act as negative regulators of the cytokinin signaling. This chain is Two-component response regulator ORR4, found in Oryza sativa subsp. indica (Rice).